Here is a 1531-residue protein sequence, read N- to C-terminus: Slit homolog 1 protein (1531 aa).

Positions 1–33 (MALTPQRGSSSGLSRPELWLLLWAAAWRLGATA) are cleaved as a signal peptide. One can recognise an LRRNT domain in the interval 34–61 (CPALCTCTGTTVDCHGTGLQAIPKNIPR). LRR repeat units follow at residues 62 to 83 (NTERLELNGNNITRIHKNDFAG), 86 to 107 (QLRVLQLMENQIGAVERGAFDD), 110 to 131 (ELERLRLNRNQLQVLPELLFQN), 134 to 155 (ALSRLDLSENSLQAVPRKAFRG), 158 to 179 (DLKNLQLDKNQISCIEEGAFRA), and 182 to 203 (GLEVLTLNNNNITTIPVSSFNH). N-linked (GlcNAc...) asparagine glycosylation is present at asparagine 72. N-linked (GlcNAc...) asparagine glycosylation occurs at asparagine 192. The LRRCT 1 domain maps to 215–265 (NHLFCDCHLAWLSQWLRQRPTIGLFTQCSGPASLRGLNVAEVQKSEFSCSG). Positions 273 to 309 (PACTLSSGSCPAMCSCSNGIVDCRGKGLTAIPANLPE) constitute an LRRNT 2 domain. A disulfide bridge connects residues cysteine 286 and cysteine 295. LRR repeat units follow at residues 310-331 (TMTEIRLELNGIKSIPPGAFSP), 334-355 (KLRRIDLSNNQIAEIAPDAFQG), 358-379 (SLNSLVLYGNKITDLPRGVFGG), 382-403 (TLQLLLLNANKINCIRPDAFQD), and 406-427 (NLSLLSLYDNKIQSLAKGTFTS). A glycan (N-linked (GlcNAc...) asparagine) is linked at asparagine 406. An LRRCT 2 domain is found at 439-489 (NPFICDCNLKWLADFLRTNPIETTGARCASPRRLANKRIGQIKSKKFRCSA). 4 cysteine pairs are disulfide-bonded: cysteine 443–cysteine 466, cysteine 445–cysteine 487, cysteine 513–cysteine 519, and cysteine 517–cysteine 526. The LRRNT 3 domain occupies 504–540 (NSECTSDVACPHKCRCEASVVECSGLKLSKIPERIPQ). 5 LRR repeats span residues 541–562 (STTELRLNNNEISILEATGLFK), 566–587 (HLKKINLSNNKVSEIEDGTFEG), 590–611 (SVSELHLTANQLESVRSGMFRG), 614–635 (GLRTLMLRNNRISCIHNDSFTG), and 638–659 (NVRLLSLYDNHITTISPGAFDT). N-linked (GlcNAc...) asparagine glycosylation occurs at asparagine 571. Residue asparagine 630 is glycosylated (N-linked (GlcNAc...) asparagine). Residues 671-721 (NPFNCNCQLAWLGDWLRKRKIVTGNPRCQNPDFLRQIPLQDVAFPDFRCEE) form the LRRCT 3 domain. Cystine bridges form between cysteine 675–cysteine 698 and cysteine 677–cysteine 719. The LRRNT 4 domain maps to 725 to 761 (EVGCLPRPQCPQECACLDTVVRCSNKHLQALPKGIPK). Asparagine 762, asparagine 801, and asparagine 806 each carry an N-linked (GlcNAc...) asparagine glycan. LRR repeat units follow at residues 762 to 783 (NVTELYLDGNQFTLVPGQLSTF), 785 to 806 (YLQLVDLSNNKISSLSNSSFTN), 809 to 830 (QLTTLILSYNALQCIPPLAFQG), and 833 to 854 (SLRLLSLHGNDVSTLQEGIFAD). The LRRCT 4 domain maps to 866–916 (NPLYCDCHLRWLSSWVKTGYKEPGIARCAGPPEMEGKLLLTTPAKKFECQG). 6 consecutive EGF-like domains span residues 927–962 (DPCLSSPCQNQGTCHNDPLEVYRCTCPSGYKGRNCE), 964–1003 (SLDSCSSNPCGNGGTCHAQEGEDAGFTCSCPSGFEGLTCG), 1005–1041 (NTDDCVKHDCVNGGVCVDGIGNYTCQCPLQYTGRACE), 1043–1081 (LVDFCSPDLNPCQHEAQCVGTPEGPRCECVPGYTGDNCS), 1083–1119 (NQDDCKDHQCQNGAQCVDEINSYACLCAEGYSGQLCE), and 1124–1160 (PRNSCEGTECQNGANCVDQGSRPVCQCLPGFGGPECE). Disulfide bonds link cysteine 929-cysteine 940, cysteine 934-cysteine 950, cysteine 952-cysteine 961, cysteine 968-cysteine 979, cysteine 973-cysteine 991, cysteine 993-cysteine 1002, cysteine 1009-cysteine 1020, cysteine 1014-cysteine 1029, cysteine 1031-cysteine 1040, cysteine 1047-cysteine 1060, cysteine 1054-cysteine 1069, cysteine 1071-cysteine 1080, cysteine 1087-cysteine 1098, cysteine 1092-cysteine 1107, cysteine 1109-cysteine 1118, cysteine 1128-cysteine 1139, cysteine 1133-cysteine 1148, and cysteine 1150-cysteine 1159. The N-linked (GlcNAc...) asparagine glycan is linked to asparagine 1026. An N-linked (GlcNAc...) asparagine glycan is attached at asparagine 1079. The Laminin G-like domain maps to 1163–1336 (LSVNFVDRDT…QMKPGVVPGC (174 aa)). 3 N-linked (GlcNAc...) asparagine glycosylation sites follow: asparagine 1186, asparagine 1256, and asparagine 1303. Disulfide bonds link cysteine 1310-cysteine 1336, cysteine 1339-cysteine 1349, cysteine 1344-cysteine 1359, cysteine 1361-cysteine 1370, cysteine 1378-cysteine 1388, cysteine 1383-cysteine 1398, cysteine 1400-cysteine 1409, cysteine 1419-cysteine 1429, cysteine 1424-cysteine 1439, cysteine 1441-cysteine 1450, cysteine 1456-cysteine 1495, cysteine 1474-cysteine 1509, cysteine 1485-cysteine 1525, and cysteine 1489-cysteine 1527. EGF-like domains follow at residues 1337–1371 (EPCRKLYCLHGICQPNATPGPVCHCEAGWGGLHCD), 1374–1410 (VDGPCHGHKCVHGKCVPLDALAYSCQCQDGYSGALCN), and 1415–1451 (VAEPCGGLQCLHGHCQASATRGAHCVCSPGFSGELCE). A CTCK domain is found at 1456 to 1531 (CRGDPVRDFH…PTKCGCAPCA (76 aa)).

As to quaternary structure, interacts with ROBO1 and GREM1. In terms of tissue distribution, in adult brains expressed in the hippocampus, cerebral cortex, and olfactory bulb but not in the cerebellum. In embryo expressed in cerebral cortex.

The protein resides in the secreted. Its function is as follows. Thought to act as molecular guidance cue in cellular migration, and function appears to be mediated by interaction with roundabout homolog receptors. During neural development involved in axonal navigation at the ventral midline of the neural tube and projection of axons to different regions. SLIT1 and SLIT2 together seem to be essential for midline guidance in the forebrain by acting as repulsive signal preventing inappropriate midline crossing by axons projecting from the olfactory bulb. The sequence is that of Slit homolog 1 protein (Slit1) from Rattus norvegicus (Rat).